The following is a 371-amino-acid chain: RT1 class I histocompatibility antigen, AA alpha chain (371 aa).

Positions 1 to 24 are cleaved as a signal peptide; the sequence is MEAMAPRTLLLLLAAALAPTQTRA. Residues 25-114 form an alpha-1 region; the sequence is GSHSLRYFYT…LRGYYNQSEG (90 aa). Topologically, residues 25–311 are extracellular; it reads GSHSLRYFYT…PSTDSNMETT (287 aa). Asn-110 is a glycosylation site (N-linked (GlcNAc...) asparagine). The segment at 115-206 is alpha-2; that stretch reads GSHTIQEMYG…ELGKETLLRS (92 aa). The tract at residues 207–298 is alpha-3; that stretch reads DPPEAHVTLH…GLPKPLSQRW (92 aa). In terms of domain architecture, Ig-like C1-type spans 209–295; it reads PEAHVTLHPR…EHEGLPKPLS (87 aa). An N-linked (GlcNAc...) asparagine glycan is attached at Asn-280. Residues 299–311 are connecting peptide; the sequence is EPSPSTDSNMETT. Residues 312–336 traverse the membrane as a helical segment; that stretch reads VIYVILGAVAMIGAVAIIGAMVAVV. The Cytoplasmic segment spans residues 337–371; sequence RRRKRNTGGKGGDYAPAPGRDSSQSSDVSLPDCKA. The interval 342–371 is disordered; sequence NTGGKGGDYAPAPGRDSSQSSDVSLPDCKA. Residues Ser-362 and Ser-365 each carry the phosphoserine modification.

It belongs to the MHC class I family. In terms of assembly, heterodimer of an alpha chain and a beta chain (beta-2-microglobulin).

It is found in the membrane. Involved in the presentation of foreign antigens to the immune system. This chain is RT1 class I histocompatibility antigen, AA alpha chain, found in Rattus norvegicus (Rat).